We begin with the raw amino-acid sequence, 477 residues long: Peptidyl-prolyl cis-trans isomerase FKBP53 (477 aa).

2 disordered regions span residues 104 to 135 (DYEH…EDEQ) and 153 to 366 (AAAP…QVRT). The span at 264 to 274 (KSKKKKNQKEK) shows a compositional bias: basic residues. Positions 299–321 (ISQISSNTKAQDGTANNAMSESS) are enriched in polar residues. Over residues 322-331 (KTPDKSAEKK) the composition is skewed to basic and acidic residues. Residues 351–366 (VEKQTPADSKSSQVRT) are compositionally biased toward polar residues. In terms of domain architecture, PPIase FKBP-type spans 389–477 (GKTVSVRYIG…TFDVELINVQ (89 aa)).

This sequence belongs to the FKBP-type PPIase family. In terms of assembly, interacts with histone H3. As to expression, broadly expressed in leaves, flowers, stems and roots. Detected in root apical meristem region and pollen.

It is found in the nucleus. It carries out the reaction [protein]-peptidylproline (omega=180) = [protein]-peptidylproline (omega=0). In terms of biological role, PPIases accelerate the folding of proteins. It catalyzes the cis-trans isomerization of proline imidic peptide bonds in oligopeptides. Histone chaperone possibly involved in H3/H4 deposition to the nucleosome. Associates with 18S rDNA chromatin and negatively regulates the level of its expression. In Arabidopsis thaliana (Mouse-ear cress), this protein is Peptidyl-prolyl cis-trans isomerase FKBP53 (FKBP53).